Reading from the N-terminus, the 272-residue chain is Shikimate dehydrogenase (NADP(+)) (272 aa).

Residues 14-16 and threonine 61 contribute to the shikimate site; that span reads SKS. Lysine 65 serves as the catalytic Proton acceptor. Glutamate 77 provides a ligand contact to NADP(+). 2 residues coordinate shikimate: asparagine 86 and aspartate 102. Residues 126–130, 149–154, and methionine 213 contribute to the NADP(+) site; these read GAGGA and NRTASR. Tyrosine 215 lines the shikimate pocket. Glycine 237 serves as a coordination point for NADP(+).

Belongs to the shikimate dehydrogenase family. In terms of assembly, homodimer.

It carries out the reaction shikimate + NADP(+) = 3-dehydroshikimate + NADPH + H(+). Its pathway is metabolic intermediate biosynthesis; chorismate biosynthesis; chorismate from D-erythrose 4-phosphate and phosphoenolpyruvate: step 4/7. Functionally, involved in the biosynthesis of the chorismate, which leads to the biosynthesis of aromatic amino acids. Catalyzes the reversible NADPH linked reduction of 3-dehydroshikimate (DHSA) to yield shikimate (SA). The polypeptide is Shikimate dehydrogenase (NADP(+)) (Salmonella enteritidis PT4 (strain P125109)).